We begin with the raw amino-acid sequence, 216 residues long: Orotate phosphoribosyltransferase (216 aa).

Lysine 30 provides a ligand contact to 5-phospho-alpha-D-ribose 1-diphosphate. 38–39 contacts orotate; it reads FF. Residues 75-76, arginine 102, lysine 103, lysine 106, histidine 108, and 128-136 each bind 5-phospho-alpha-D-ribose 1-diphosphate; these read YK and DDVITAGTA. Orotate is bound by residues threonine 132 and arginine 160.

The protein belongs to the purine/pyrimidine phosphoribosyltransferase family. PyrE subfamily. Homodimer. The cofactor is Mg(2+).

The catalysed reaction is orotidine 5'-phosphate + diphosphate = orotate + 5-phospho-alpha-D-ribose 1-diphosphate. It participates in pyrimidine metabolism; UMP biosynthesis via de novo pathway; UMP from orotate: step 1/2. Functionally, catalyzes the transfer of a ribosyl phosphate group from 5-phosphoribose 1-diphosphate to orotate, leading to the formation of orotidine monophosphate (OMP). The sequence is that of Orotate phosphoribosyltransferase from Acinetobacter baylyi (strain ATCC 33305 / BD413 / ADP1).